Consider the following 371-residue polypeptide: Probable F-box protein At1g65740 (371 aa).

One can recognise an F-box domain in the interval 2-49; that stretch reads VDWSTLPEELLHFIAARSFSLVEYKRFSSICVSWHSSVSGVKKNPFHR.

The polypeptide is Probable F-box protein At1g65740 (Arabidopsis thaliana (Mouse-ear cress)).